A 493-amino-acid polypeptide reads, in one-letter code: Protein LTV1 homolog (493 aa).

Disordered stretches follow at residues 42 to 63 (AAARQQKPKDPEPPTDPAQRQE), 97 to 119 (PNQARKQKVQDSEKPGPAPKLML), and 170 to 207 (IQAMAEGDSDDEEWDDEDGEEQSDMDFDSDDLNEDENE). Residues 176–207 (GDSDDEEWDDEDGEEQSDMDFDSDDLNEDENE) show a composition bias toward acidic residues. Ser-345, Ser-369, Ser-370, Ser-424, and Ser-427 each carry phosphoserine. The disordered stretch occupies residues 359–387 (VIDEPRRSRRSSASTNPAPIQIDPKTGLP). Positions 437–468 (KDETHEEKKERKRLLKDYRNERRIEKKANTEA) form a coiled coil. Basic and acidic residues predominate over residues 465–474 (NTEAFKEEKK). The interval 465–493 (NTEAFKEEKKRQTHVKINQRTNQQGASIV) is disordered. The span at 479-493 (VKINQRTNQQGASIV) shows a compositional bias: polar residues.

It belongs to the LTV1 family. As to quaternary structure, interacts with RpS3; the interaction is RNA-independent. Associates with free 40S ribosome subunits.

Its subcellular location is the cytoplasm. Its function is as follows. Necessary for the biogenesis of 40S ribosome subunits by regulating pre-rRNA processing. Non-ribosomal factor required for efficient nuclear export of the ribosomal 40S subunit. Necessary for endoreplication driven by Myc. The chain is Protein LTV1 homolog from Drosophila melanogaster (Fruit fly).